We begin with the raw amino-acid sequence, 548 residues long: Chaperonin GroEL (548 aa).

ATP is bound by residues 30–33 (TLGP), Lys51, 87–91 (DGTTT), Gly415, 479–481 (NAA), and Asp495.

Belongs to the chaperonin (HSP60) family. In terms of assembly, forms a cylinder of 14 subunits composed of two heptameric rings stacked back-to-back. Interacts with the co-chaperonin GroES.

The protein resides in the cytoplasm. It catalyses the reaction ATP + H2O + a folded polypeptide = ADP + phosphate + an unfolded polypeptide.. Together with its co-chaperonin GroES, plays an essential role in assisting protein folding. The GroEL-GroES system forms a nano-cage that allows encapsulation of the non-native substrate proteins and provides a physical environment optimized to promote and accelerate protein folding. This chain is Chaperonin GroEL, found in Lawsonia intracellularis (strain PHE/MN1-00).